Here is a 137-residue protein sequence, read N- to C-terminus: Nucleoside diphosphate kinase (137 aa).

ATP is bound by residues K10, F58, R86, T92, R103, and N113. H116 acts as the Pros-phosphohistidine intermediate in catalysis.

The protein belongs to the NDK family. In terms of assembly, homotetramer. Mg(2+) is required as a cofactor.

Its subcellular location is the cytoplasm. It catalyses the reaction a 2'-deoxyribonucleoside 5'-diphosphate + ATP = a 2'-deoxyribonucleoside 5'-triphosphate + ADP. The catalysed reaction is a ribonucleoside 5'-diphosphate + ATP = a ribonucleoside 5'-triphosphate + ADP. Its function is as follows. Major role in the synthesis of nucleoside triphosphates other than ATP. The ATP gamma phosphate is transferred to the NDP beta phosphate via a ping-pong mechanism, using a phosphorylated active-site intermediate. The sequence is that of Nucleoside diphosphate kinase from Helicobacter acinonychis (strain Sheeba).